The chain runs to 508 residues: MDWTEKYRPTTLSEVRGNDKARDALKKWAETWDDHREAVILYGSPGIGKTSAAHALANDMEWPTIELNASDSRTKDVINRVAGEAAKSGTLTAGGGGRRLVIMDEADNIHGNADRGGARAITALVKEASQPMILIANEYYEMSNGLRNNCQDIEFRDVSPRSIVPVLRDLCRQEGVEYESDALQELAEQNSGGLRGAVKDLQAIAETTERLTADDVVTGERDTTEGIFEYLDVVLKEAGAQDALEASYDVDETPDDLINWIEDNMPKDYEGTELVRAYEFLSNADQWLGRVRETQNYSFWRYAGDNMTAGVAAARDGTKGGWTRYGPPSYWSKLGRSKGTRNTRDYVAQQIAAIDGVSMRTARREIMPFLATMTHHCRNRELTVAMAATYDMEAEHVSFVTGSGKDTNKVQDIVADAEALKEEAAVEHSGGVFEGASANGGDGDSDADGDAPDTDAGEESGDQQVTLAADDGAESDATSDGTTTDDETETASEAAEDDDQQSGLSDFM.

43–50 (GSPGIGKT) lines the ATP pocket. Residues 425-508 (AVEHSGGVFE…DQQSGLSDFM (84 aa)) form a disordered region. Composition is skewed to acidic residues over residues 443 to 461 (GDSD…EESG) and 483 to 500 (TTDD…DDDQ).

This sequence belongs to the activator 1 small subunits family. RfcL subfamily. Heteromultimer composed of small subunits (RfcS) and large subunits (RfcL).

Part of the RFC clamp loader complex which loads the PCNA sliding clamp onto DNA. The chain is Replication factor C large subunit from Haloarcula marismortui (strain ATCC 43049 / DSM 3752 / JCM 8966 / VKM B-1809) (Halobacterium marismortui).